Reading from the N-terminus, the 313-residue chain is Probable 5-dehydro-4-deoxyglucarate dehydratase (313 aa).

Belongs to the DapA family.

The catalysed reaction is 5-dehydro-4-deoxy-D-glucarate + H(+) = 2,5-dioxopentanoate + CO2 + H2O. Its pathway is carbohydrate acid metabolism; D-glucarate degradation; 2,5-dioxopentanoate from D-glucarate: step 2/2. The chain is Probable 5-dehydro-4-deoxyglucarate dehydratase from Bradyrhizobium sp. (strain BTAi1 / ATCC BAA-1182).